Consider the following 323-residue polypeptide: Cyclin-D5-1 (323 aa).

Disordered stretches follow at residues 17–36 (ESSL…KQEP) and 281–323 (HMTP…MRRL).

Belongs to the cyclin family. Cyclin D subfamily.

In Arabidopsis thaliana (Mouse-ear cress), this protein is Cyclin-D5-1 (CYCD5-1).